The following is a 250-amino-acid chain: tRNA-specific adenosine deaminase subunit TAD2 (250 aa).

The 119-residue stretch at 1–119 (MQHIKHMRTA…ERFGGNGTVL (119 aa)) folds into the CMP/dCMP-type deaminase domain. Zn(2+) is bound at residue His54. The active-site Proton donor is the Glu56. 2 residues coordinate Zn(2+): Cys88 and Cys91.

It belongs to the cytidine and deoxycytidylate deaminase family. ADAT2 subfamily. As to quaternary structure, heterodimer with TAD3. Zn(2+) is required as a cofactor.

It localises to the cytoplasm. The protein localises to the nucleus. The catalysed reaction is adenosine(34) in tRNA + H2O + H(+) = inosine(34) in tRNA + NH4(+). Structural subunit of tRNA-specific adenosine deaminase, which deaminates adenosine-34 (the first, also called wobble position of the anticodon) to inosine in many tRNAs. Inosine-34 allows the decoding of 3 different nucleotides at the third position of mRNA codons, as inosine is able to pair with U, C, and A. The sequence is that of tRNA-specific adenosine deaminase subunit TAD2 (TAD2) from Saccharomyces cerevisiae (strain ATCC 204508 / S288c) (Baker's yeast).